The sequence spans 354 residues: Probable L-ascorbate-6-phosphate lactonase UlaG (354 aa).

Belongs to the UlaG family. A divalent metal cation serves as cofactor.

It is found in the cytoplasm. It carries out the reaction L-ascorbate 6-phosphate + H2O = 3-dehydro-L-gulonate 6-phosphate. The protein operates within cofactor degradation; L-ascorbate degradation; D-xylulose 5-phosphate from L-ascorbate: step 1/4. Its function is as follows. Probably catalyzes the hydrolysis of L-ascorbate-6-P into 3-keto-L-gulonate-6-P. Is essential for L-ascorbate utilization under anaerobic conditions. In Escherichia coli O127:H6 (strain E2348/69 / EPEC), this protein is Probable L-ascorbate-6-phosphate lactonase UlaG.